We begin with the raw amino-acid sequence, 146 residues long: Hemoglobin cathodic subunit beta (146 aa).

Residues 2-146 enclose the Globin domain; that stretch reads QWSSSERSVI…VVSGLSKQYF (145 aa). H63 contributes to the heme b binding site.

As to quaternary structure, heterotetramer of two alpha and two beta chains. In terms of tissue distribution, red blood cells.

Involved in oxygen transport from the gills to various peripheral tissues. The polypeptide is Hemoglobin cathodic subunit beta (Ophisurus serpens (Serpent eel)).